Consider the following 231-residue polypeptide: Thermonuclease (231 aa).

Positions 1 to 26 are cleaved as a signal peptide; that stretch reads MLVMTEYLLSAGICMAIVSILLIGMA. Propeptides lie at residues 27 to 63 and 64 to 82; these read ISNVSKGQYAKRFFFFATSCLVLTLVVVSSLSSSANA and SQTDNGVNRSGSEDPTVYS. Over residues 61–73 the composition is skewed to polar residues; sequence ANASQTDNGVNRS. The segment at 61–86 is disordered; the sequence is ANASQTDNGVNRSGSEDPTVYSATST. D103 is a binding site for Ca(2+). R117 is an active-site residue. Residues D122 and T123 each contribute to the Ca(2+) site. Catalysis depends on residues E125 and R169. The span at 203-219 shows a compositional bias: basic and acidic residues; that stretch reads HEQHLRKSEAQAKKEKL. A disordered region spans residues 203-231; that stretch reads HEQHLRKSEAQAKKEKLNIWSEDNADSGQ.

It belongs to the thermonuclease family. The cofactor is Ca(2+).

The protein resides in the secreted. Its subcellular location is the membrane. The enzyme catalyses Endonucleolytic cleavage to nucleoside 3'-phosphates and 3'-phosphooligonucleotide end-products.. In terms of biological role, enzyme that catalyzes the hydrolysis of both DNA and RNA at the 5' position of the phosphodiester bond. The sequence is that of Thermonuclease from Staphylococcus aureus.